The primary structure comprises 494 residues: Protein translocase subunit SecD (494 aa).

6 helical membrane-spanning segments follow: residues 7–27 (WFAL…NLPF), 322–342 (LIAA…FYRL), 345–365 (FIAI…YALI), 372–392 (PGVA…VLIF), 420–440 (IIDG…LGTG), and 441–461 (FVKG…FTAL).

This sequence belongs to the SecD/SecF family. SecD subfamily. In terms of assembly, forms a complex with SecF. Part of the essential Sec protein translocation apparatus which comprises SecA, SecYEG and auxiliary proteins SecDF. Other proteins may also be involved.

Its subcellular location is the cell inner membrane. In terms of biological role, part of the Sec protein translocase complex. Interacts with the SecYEG preprotein conducting channel. SecDF uses the proton motive force (PMF) to complete protein translocation after the ATP-dependent function of SecA. Functionally, probably participates in protein translocation into and across both the cytoplasmic and thylakoid membranes in cyanobacterial cells. The polypeptide is Protein translocase subunit SecD (Prochlorococcus marinus (strain SARG / CCMP1375 / SS120)).